A 314-amino-acid chain; its full sequence is Lipoyl synthase (314 aa).

C60, C65, C71, C86, C90, C93, and S300 together coordinate [4Fe-4S] cluster. The Radical SAM core domain occupies 72-289 (FRKGTATFMI…RQFGLSIGFS (218 aa)).

The protein belongs to the radical SAM superfamily. Lipoyl synthase family. Requires [4Fe-4S] cluster as cofactor.

It is found in the cytoplasm. It carries out the reaction [[Fe-S] cluster scaffold protein carrying a second [4Fe-4S](2+) cluster] + N(6)-octanoyl-L-lysyl-[protein] + 2 oxidized [2Fe-2S]-[ferredoxin] + 2 S-adenosyl-L-methionine + 4 H(+) = [[Fe-S] cluster scaffold protein] + N(6)-[(R)-dihydrolipoyl]-L-lysyl-[protein] + 4 Fe(3+) + 2 hydrogen sulfide + 2 5'-deoxyadenosine + 2 L-methionine + 2 reduced [2Fe-2S]-[ferredoxin]. It functions in the pathway protein modification; protein lipoylation via endogenous pathway; protein N(6)-(lipoyl)lysine from octanoyl-[acyl-carrier-protein]: step 2/2. In terms of biological role, catalyzes the radical-mediated insertion of two sulfur atoms into the C-6 and C-8 positions of the octanoyl moiety bound to the lipoyl domains of lipoate-dependent enzymes, thereby converting the octanoylated domains into lipoylated derivatives. This is Lipoyl synthase from Pelobacter propionicus (strain DSM 2379 / NBRC 103807 / OttBd1).